The following is a 302-amino-acid chain: Sulfate adenylyltransferase subunit 2 (302 aa).

The protein belongs to the PAPS reductase family. CysD subfamily. In terms of assembly, heterodimer composed of CysD, the smaller subunit, and CysN.

It carries out the reaction sulfate + ATP + H(+) = adenosine 5'-phosphosulfate + diphosphate. Its pathway is sulfur metabolism; hydrogen sulfide biosynthesis; sulfite from sulfate: step 1/3. Functionally, with CysN forms the ATP sulfurylase (ATPS) that catalyzes the adenylation of sulfate producing adenosine 5'-phosphosulfate (APS) and diphosphate, the first enzymatic step in sulfur assimilation pathway. APS synthesis involves the formation of a high-energy phosphoric-sulfuric acid anhydride bond driven by GTP hydrolysis by CysN coupled to ATP hydrolysis by CysD. The protein is Sulfate adenylyltransferase subunit 2 of Pectobacterium carotovorum subsp. carotovorum (strain PC1).